We begin with the raw amino-acid sequence, 193 residues long: Thymidine kinase (193 aa).

ATP is bound by residues 9–16 (STMNAGKS) and 87–90 (DEAN). The active-site Proton acceptor is E88. 4 residues coordinate Zn(2+): C145, C147, C182, and H185.

It belongs to the thymidine kinase family. Homotetramer.

It localises to the cytoplasm. It catalyses the reaction thymidine + ATP = dTMP + ADP + H(+). This Agrobacterium fabrum (strain C58 / ATCC 33970) (Agrobacterium tumefaciens (strain C58)) protein is Thymidine kinase.